Consider the following 423-residue polypeptide: Putative competence-damage inducible protein (423 aa).

Belongs to the CinA family.

The chain is Putative competence-damage inducible protein from Streptococcus equi subsp. equi (strain 4047).